A 158-amino-acid chain; its full sequence is S-ribosylhomocysteine lyase (158 aa).

His-56, His-60, and Cys-125 together coordinate Fe cation.

The protein belongs to the LuxS family. As to quaternary structure, homodimer. It depends on Fe cation as a cofactor.

The catalysed reaction is S-(5-deoxy-D-ribos-5-yl)-L-homocysteine = (S)-4,5-dihydroxypentane-2,3-dione + L-homocysteine. Functionally, involved in the synthesis of autoinducer 2 (AI-2) which is secreted by bacteria and is used to communicate both the cell density and the metabolic potential of the environment. The regulation of gene expression in response to changes in cell density is called quorum sensing. Catalyzes the transformation of S-ribosylhomocysteine (RHC) to homocysteine (HC) and 4,5-dihydroxy-2,3-pentadione (DPD). This is S-ribosylhomocysteine lyase from Leuconostoc mesenteroides subsp. mesenteroides (strain ATCC 8293 / DSM 20343 / BCRC 11652 / CCM 1803 / JCM 6124 / NCDO 523 / NBRC 100496 / NCIMB 8023 / NCTC 12954 / NRRL B-1118 / 37Y).